The following is a 140-amino-acid chain: Methylglyoxal synthase (140 aa).

The MGS-like domain occupies 1-140 (MKIALIAHDR…HDQDSNPINL (140 aa)). Substrate is bound by residues H8, K12, 34–37 (TGTT), and 54–55 (SG). D60 (proton donor/acceptor) is an active-site residue. Position 87 (H87) interacts with substrate.

This sequence belongs to the methylglyoxal synthase family.

It carries out the reaction dihydroxyacetone phosphate = methylglyoxal + phosphate. Functionally, catalyzes the formation of methylglyoxal from dihydroxyacetone phosphate. In Latilactobacillus sakei subsp. sakei (strain 23K) (Lactobacillus sakei subsp. sakei), this protein is Methylglyoxal synthase.